The following is a 396-amino-acid chain: Elongation factor Tu (396 aa).

Residues lysine 10 to glutamate 206 form the tr-type G domain. Positions glycine 19–threonine 26 are G1. Glycine 19–threonine 26 lines the GTP pocket. Threonine 26 is a Mg(2+) binding site. Positions glycine 60–asparagine 64 are G2. The segment at aspartate 81–glycine 84 is G3. Residues aspartate 81–histidine 85 and asparagine 136–aspartate 139 each bind GTP. The interval asparagine 136–aspartate 139 is G4. The G5 stretch occupies residues serine 174–lysine 176.

Belongs to the TRAFAC class translation factor GTPase superfamily. Classic translation factor GTPase family. EF-Tu/EF-1A subfamily. Monomer.

The protein resides in the cytoplasm. It catalyses the reaction GTP + H2O = GDP + phosphate + H(+). Functionally, GTP hydrolase that promotes the GTP-dependent binding of aminoacyl-tRNA to the A-site of ribosomes during protein biosynthesis. The sequence is that of Elongation factor Tu from Bordetella bronchiseptica (strain ATCC BAA-588 / NCTC 13252 / RB50) (Alcaligenes bronchisepticus).